The chain runs to 225 residues: Membrane-spanning 4-domains subfamily A member 4D (225 aa).

At 1-42 (MQGLAQTTMAVVPGGAPPSENSVIKSQMWNKNKEKFLKGEPK) the chain is on the cytoplasmic side. A helical transmembrane segment spans residues 43-63 (VLGAIQVMIAFINFSLGIIII). Residues 64 to 73 (LNRVSERFMS) lie on the Extracellular side of the membrane. Residues 74 to 94 (VLLLAPFWGSIMFIFSGSLSI) traverse the membrane as a helical segment. The Cytoplasmic portion of the chain corresponds to 95–113 (AAGVKPTKAMIISSLSVNT). A helical membrane pass occupies residues 114–134 (ISSVLAVAASIIGVISVISGV). Topologically, residues 135–148 (FRQFRSQPAIASLD) are extracellular. Residues 149–169 (VLMTILNMLEFCIAVSVSAFG) form a helical membrane-spanning segment. Residues 170 to 225 (CKASCCNSSEVLVVLPSNSAVTVTAPPMILQPLPPSECQGKNVPENLYRNQPGEIV) lie on the Cytoplasmic side of the membrane.

The protein belongs to the MS4A family. As to expression, expressed in thymus, spleen, peripheral lymph node, liver, kidney, heart, colon, lung, and testes.

It localises to the membrane. In terms of biological role, may be involved in signal transduction as a component of a multimeric receptor complex. This Mus musculus (Mouse) protein is Membrane-spanning 4-domains subfamily A member 4D (Ms4a4d).